A 406-amino-acid polypeptide reads, in one-letter code: Transforming growth factor beta regulator 1 (406 aa).

2 disordered regions span residues Met-1 to Lys-26 and Gly-116 to Lys-144. Position 2 is an N-acetylserine (Ser-2). The residue at position 13 (Thr-13) is a Phosphothreonine. Residues Glu-134–Lys-144 show a composition bias toward basic and acidic residues. The FYR N-terminal domain occupies Val-177–Gly-236. Residues Gly-237–Lys-316 enclose the FYR C-terminal domain.

Belongs to the TBRG1 family. In terms of assembly, interacts with CDKN2A and MDM2. Post-translationally, ubiquitinated; mediated by MDM2 and leading to its subsequent proteasomal degradation.

The protein localises to the nucleus. Functionally, acts as a growth inhibitor. Can activate p53/TP53, causes G1 arrest and collaborates with CDKN2A to restrict proliferation, but does not require either protein to inhibit DNA synthesis. Redistributes CDKN2A into the nucleoplasm. Involved in maintaining chromosomal stability. The sequence is that of Transforming growth factor beta regulator 1 (Tbrg1) from Rattus norvegicus (Rat).